The chain runs to 496 residues: Solute carrier family 2, facilitated glucose transporter member 11 (496 aa).

At 1 to 11 (MRALRRLIQGR) the chain is on the cytoplasmic side. The helical transmembrane segment at 12–32 (ILLLTICAAGIGGTFQFGYNL) threads the bilayer. Topologically, residues 33–61 (SIINAPTLHIQEFTNETWQARTGEPLPDH) are extracellular. N47 carries N-linked (GlcNAc...) asparagine glycosylation. A helical transmembrane segment spans residues 62–82 (LVLLMWSLIVSLYPLGGLFGA). The Cytoplasmic segment spans residues 83-97 (LLAGPLAITLGRKKS). A helical membrane pass occupies residues 98–118 (LLVNNIFVVSAAILFGFSRKA). Residues 119–128 (GSFEMIMLGR) are Extracellular-facing. Residues 129 to 149 (LLVGVNAGVSMNIQPMYLGES) form a helical membrane-spanning segment. The Cytoplasmic segment spans residues 150–157 (APKELRGA). The chain crosses the membrane as a helical span at residues 158–178 (VAMSSAIFTALGIVMGQVVGL). Residues 179–187 (RELLGGPQA) lie on the Extracellular side of the membrane. A helical transmembrane segment spans residues 188–208 (WPLLLASCLVPGALQLASLPL). The Cytoplasmic segment spans residues 209–273 (LPESPRYLLI…LFQHRALRRQ (65 aa)). A helical membrane pass occupies residues 274 to 294 (VTSLVVLGSAMELCGNDSVYA). Over 295–311 (YASSVFRKAGVPEAKIQ) the chain is Extracellular. A helical transmembrane segment spans residues 312–332 (YAIIGTGSCELLTAVVSCVVI). Topologically, residues 333–338 (ERVGRR) are cytoplasmic. Residues 339-359 (VLLIGGYSLMTCWGSIFTVAL) form a helical membrane-spanning segment. At 360-364 (CLQSS) the chain is on the extracellular side. Residues 365–385 (FPWTLYLAMACIFAFILSFGI) traverse the membrane as a helical segment. At 386 to 408 (GPAGVTGILATELFDQMARPAAC) the chain is on the cytoplasmic side. The chain crosses the membrane as a helical span at residues 409-429 (MVCGALMWIMLILVGLGFPFI). The Extracellular segment spans residues 430 to 435 (MEALSH). A helical transmembrane segment spans residues 436-456 (FLYVPFLGVCVCGAIYTGLFL). At 457 to 496 (PETKGKTFQEISKELHRLNFPRRAQGPTWRSLEVIQSTEL) the chain is on the cytoplasmic side.

This sequence belongs to the major facilitator superfamily. Sugar transporter (TC 2.A.1.1) family. Glucose transporter subfamily. Expressed in heart and skeletal muscle.

It localises to the cell membrane. It carries out the reaction D-glucose(out) = D-glucose(in). Functionally, facilitative glucose transporter. This Homo sapiens (Human) protein is Solute carrier family 2, facilitated glucose transporter member 11.